Consider the following 536-residue polypeptide: Berberine bridge enzyme-like 2 (536 aa).

The N-terminal stretch at 1-20 is a signal peptide; the sequence is MKIFCLILFLISSFISTSLA. A disulfide bridge connects residues Cys-35 and Cys-98. 6 N-linked (GlcNAc...) asparagine glycosylation sites follow: Asn-38, Asn-73, Asn-136, Asn-266, Asn-334, and Asn-352. An FAD-binding PCMH-type domain is found at 76–250; sequence ATPKPAIVIA…LAFKIKLVPV (175 aa). The segment at residues 113-175 is a cross-link (6-(S-cysteinyl)-8alpha-(pros-histidyl)-FAD (His-Cys)); that stretch reads HDYEGVSYIS…KSHGFPAGVC (63 aa).

It belongs to the oxygen-dependent FAD-linked oxidoreductase family. FAD serves as cofactor. The FAD cofactor is bound via a bicovalent 6-S-cysteinyl, 8alpha-N1-histidyl FAD linkage.

It localises to the secreted. It is found in the cell wall. The chain is Berberine bridge enzyme-like 2 from Arabidopsis thaliana (Mouse-ear cress).